A 473-amino-acid chain; its full sequence is Lactate utilization protein B (473 aa).

4Fe-4S ferredoxin-type domains lie at Gly-302–Tyr-332 and Tyr-351–Leu-380. [4Fe-4S] cluster-binding residues include Cys-311, Cys-314, Cys-317, Cys-321, Cys-364, Cys-367, and Cys-371.

Belongs to the LutB/YkgF family.

Functionally, is involved in L-lactate degradation and allows cells to grow with lactate as the sole carbon source. Has probably a role as an electron transporter during oxidation of L-lactate. In Bacillus cytotoxicus (strain DSM 22905 / CIP 110041 / 391-98 / NVH 391-98), this protein is Lactate utilization protein B.